A 387-amino-acid polypeptide reads, in one-letter code: Limonene 1,2-monooxygenase (387 aa).

Belongs to the bacterial luciferase oxidoreductase family. FAD serves as cofactor.

It catalyses the reaction (4S)-limonene + NADPH + O2 + H(+) = limonene 1,2-epoxide + NADP(+) + H2O. It carries out the reaction (4S)-limonene + NADH + O2 + H(+) = limonene 1,2-epoxide + NAD(+) + H2O. The enzyme catalyses (4R)-limonene + NADH + O2 + H(+) = limonene 1,2-epoxide + NAD(+) + H2O. The catalysed reaction is (4R)-limonene + NADPH + O2 + H(+) = limonene 1,2-epoxide + NADP(+) + H2O. Its pathway is terpene metabolism; (4R)-limonene degradation; (1S,4R)-1-hydroxylimonen-2-one from (4R)-limonene: step 1/3. Acts on both enantiomers of limonene by their NAD-dependent epoxidation at the 1,2 double bond forming limonene-1,2-epoxide. This Rhodococcus erythropolis (Arthrobacter picolinophilus) protein is Limonene 1,2-monooxygenase (limB).